Consider the following 146-residue polypeptide: Kappa-casein (146 aa).

2 O-linked (GalNAc...) threonine glycosylation sites follow: threonine 107 and threonine 112. Serine 125 is modified (phosphoserine; alternate). Serine 125 is a glycosylation site (O-linked (GalNAc...) serine; alternate). The O-linked (GalNAc...) threonine glycan is linked to threonine 142. Serine 143 is modified (phosphoserine).

This sequence belongs to the kappa-casein family. Mammary gland specific. Secreted in milk.

It localises to the secreted. In terms of biological role, kappa-casein stabilizes micelle formation, preventing casein precipitation in milk. The chain is Kappa-casein (CSN3) from Tapirus indicus (Asiatic tapir).